The sequence spans 585 residues: Mitochondrial sodium/calcium exchanger protein (585 aa).

A signal peptide spans M1–G26. Over A27 to L95 the chain is Extracellular. N-linked (GlcNAc...) asparagine glycosylation occurs at N46. A helical transmembrane segment spans residues L96–V116. Residues T117 to A140 lie on the Cytoplasmic side of the membrane. Residues G141–F161 form a helical membrane-spanning segment. Over S162–G168 the chain is Extracellular. Residues L169–I189 traverse the membrane as a helical segment. The Cytoplasmic segment spans residues T190–D205. Residues I206–T226 traverse the membrane as a helical segment. Position 227 (L227) is a topological domain, extracellular. A helical membrane pass occupies residues V228–C247. Residues T248–K325 are Cytoplasmic-facing. Residue S258 is modified to Phosphoserine; by PKA. A helical transmembrane segment spans residues L326–D346. Residues P347–C360 are Extracellular-facing. A helical membrane pass occupies residues L361–I381. Residues Y382–E383 lie on the Cytoplasmic side of the membrane. A helical membrane pass occupies residues I384–V404. The Extracellular segment spans residues T405 to R416. Residues L417–A437 traverse the membrane as a helical segment. At T438–R445 the chain is on the cytoplasmic side. A helical membrane pass occupies residues S446–G466. The Extracellular segment spans residues N467–C491. A helical membrane pass occupies residues F492–V512. At R513–G525 the chain is on the cytoplasmic side. Residues L526–V546 form a helical membrane-spanning segment. Residues P547–L559 are Extracellular-facing. A helical transmembrane segment spans residues C560–I580. At H581–D585 the chain is on the cytoplasmic side.

The protein belongs to the Ca(2+):cation antiporter (CaCA) (TC 2.A.19) family. SLC24A subfamily. Phosphorylation at Ser-258 by PKA prevents calcium overload. In terms of tissue distribution, widely expressed. Present at higher level in pancreas, stomach, skeletal muscle and skin (at protein level). Ubiquitously expressed.

It localises to the mitochondrion inner membrane. The enzyme catalyses Ca(2+)(in) + 3 Na(+)(out) = Ca(2+)(out) + 3 Na(+)(in). It catalyses the reaction 3 Li(+)(out) + Ca(2+)(in) = 3 Li(+)(in) + Ca(2+)(out). Its activity is regulated as follows. Inhibited by the sodium/calcium exchanger inhibitor CGP-37157. Strongly inhibited by zinc. In terms of biological role, mitochondrial sodium/calcium antiporter that mediates sodium-dependent calcium efflux from mitochondrion, by mediating the exchange of 3 sodium ions per 1 calcium ion. Plays a central role in mitochondrial calcium homeostasis by mediating mitochondrial calcium extrusion: calcium efflux is essential for mitochondrial function and cell survival, notably in cardiomyocytes. Regulates rates of glucose-dependent insulin secretion in pancreatic beta-cells during the first phase of insulin secretion: acts by mediating efflux of calcium from mitochondrion, thereby affecting cytoplasmic calcium responses. Required for store-operated Ca(2+) entry (SOCE) and Ca(2+) release-activated Ca(2+) (CRAC) channel regulation: sodium transport by SLC8B1 leads to promote calcium-shuttling that modulates mitochondrial redox status, thereby regulating SOCE activity. Involved in B-lymphocyte chemotaxis. Able to transport Ca(2+) in exchange of either Li(+) or Na(+), explaining how Li(+) catalyzes Ca(2+) exchange. In contrast to other members of the family its function is independent of K(+). In Rattus norvegicus (Rat), this protein is Mitochondrial sodium/calcium exchanger protein.